Reading from the N-terminus, the 212-residue chain is ATP-dependent dethiobiotin synthetase BioD (212 aa).

13–18 (GIGKTV) contributes to the ATP binding site. Position 17 (T17) interacts with Mg(2+). The active site involves K33. S37 lines the substrate pocket. E100 provides a ligand contact to Mg(2+). ATP contacts are provided by residues 100–103 (EGAG) and 184–186 (PRL).

Belongs to the dethiobiotin synthetase family. As to quaternary structure, homodimer. It depends on Mg(2+) as a cofactor.

The protein localises to the cytoplasm. It catalyses the reaction (7R,8S)-7,8-diammoniononanoate + CO2 + ATP = (4R,5S)-dethiobiotin + ADP + phosphate + 3 H(+). The protein operates within cofactor biosynthesis; biotin biosynthesis; biotin from 7,8-diaminononanoate: step 1/2. In terms of biological role, catalyzes a mechanistically unusual reaction, the ATP-dependent insertion of CO2 between the N7 and N8 nitrogen atoms of 7,8-diaminopelargonic acid (DAPA, also called 7,8-diammoniononanoate) to form a ureido ring. This Rhodopseudomonas palustris (strain ATCC BAA-98 / CGA009) protein is ATP-dependent dethiobiotin synthetase BioD.